A 228-amino-acid chain; its full sequence is DNA repair and recombination protein RadB (228 aa).

The protein belongs to the eukaryotic RecA-like protein family. RadB subfamily.

In terms of biological role, involved in DNA repair and in homologous recombination. May regulate the cleavage reactions of the branch-structured DNA. Has a very weak ATPase activity that is not stimulated by DNA. Binds DNA but does not promote DNA strands exchange. The chain is DNA repair and recombination protein RadB from Thermococcus sibiricus (strain DSM 12597 / MM 739).